The following is a 692-amino-acid chain: Elongation factor G (692 aa).

A tr-type G domain is found at 8 to 283 (NRIRNIGIAA…AVIDYLPAPT (276 aa)). Residues 17–24 (AHIDAGKT), 81–85 (DTPGH), and 135–138 (NKMD) each bind GTP.

It belongs to the TRAFAC class translation factor GTPase superfamily. Classic translation factor GTPase family. EF-G/EF-2 subfamily.

The protein resides in the cytoplasm. In terms of biological role, catalyzes the GTP-dependent ribosomal translocation step during translation elongation. During this step, the ribosome changes from the pre-translocational (PRE) to the post-translocational (POST) state as the newly formed A-site-bound peptidyl-tRNA and P-site-bound deacylated tRNA move to the P and E sites, respectively. Catalyzes the coordinated movement of the two tRNA molecules, the mRNA and conformational changes in the ribosome. This is Elongation factor G from Helicobacter acinonychis (strain Sheeba).